The sequence spans 163 residues: Endoribonuclease YbeY (163 aa).

The Zn(2+) site is built by His-121, His-125, and His-131.

This sequence belongs to the endoribonuclease YbeY family. Zn(2+) is required as a cofactor.

The protein resides in the cytoplasm. Its function is as follows. Single strand-specific metallo-endoribonuclease involved in late-stage 70S ribosome quality control and in maturation of the 3' terminus of the 16S rRNA. The sequence is that of Endoribonuclease YbeY from Synechococcus sp. (strain JA-3-3Ab) (Cyanobacteria bacterium Yellowstone A-Prime).